The chain runs to 312 residues: Taste receptor type 2 member 9 (312 aa).

The Extracellular segment spans residues 1 to 9 (MPSAIEAIY). Residues 10 to 32 (IILIAGELTIGIWGNGFIVLVNC) traverse the membrane as a helical segment. Topologically, residues 33-52 (IDWLKRRDISLIDIILISLA) are cytoplasmic. A helical transmembrane segment spans residues 53–72 (ISRICLLCVISLDGFFMLLF). Topologically, residues 73-86 (PGTYGNSVLVSIVN) are extracellular. A helical membrane pass occupies residues 87–109 (VVWTFANNSSLWFTSCLSIFYLL). Residues 110-128 (KIANISHPFFFWLKLKINK) are Cytoplasmic-facing. Residues 129 to 146 (VMLAILLGSFLISLIISV) form a helical membrane-spanning segment. The Extracellular segment spans residues 147-180 (PKNDDMWYHLFKVSHEENITWKFKVSKIPGTFKQ). Residue Asn164 is glycosylated (N-linked (GlcNAc...) asparagine). Residues 181–203 (LTLNLGVMVPFILCLISFFLLLF) traverse the membrane as a helical segment. Over 204–234 (SLVRHTKQIRLHATGFRDPSTEAHMRAIKAV) the chain is Cytoplasmic. Residues 235–257 (IIFLLLLIVYYPVFLVMTSSALI) traverse the membrane as a helical segment. Residues 258–261 (PQGK) lie on the Extracellular side of the membrane. Residues 262 to 284 (LVLMIGDIVTVIFPSSHSFILIM) traverse the membrane as a helical segment. At 285–312 (GNSKLREAFLKMLRFVKCFLRRRKPFVP) the chain is on the cytoplasmic side.

This sequence belongs to the G-protein coupled receptor T2R family. In terms of tissue distribution, expressed in subsets of taste receptor cells of the tongue and palate epithelium and exclusively in gustducin-positive cells.

Its subcellular location is the membrane. In terms of biological role, gustducin-coupled receptor implicated in the perception of bitter compounds in the oral cavity and the gastrointestinal tract. Signals through PLCB2 and the calcium-regulated cation channel TRPM5. The protein is Taste receptor type 2 member 9 (TAS2R9) of Homo sapiens (Human).